The following is a 339-amino-acid chain: Glycerol-3-phosphate dehydrogenase [NAD(P)+] (339 aa).

4 residues coordinate NADPH: serine 15, tyrosine 16, histidine 36, and lysine 110. Residues lysine 110, glycine 139, and threonine 141 each coordinate sn-glycerol 3-phosphate. An NADPH-binding site is contributed by alanine 143. Sn-glycerol 3-phosphate-binding residues include lysine 195, aspartate 248, serine 258, arginine 259, and asparagine 260. Lysine 195 serves as the catalytic Proton acceptor. Arginine 259 lines the NADPH pocket. NADPH contacts are provided by valine 283 and glutamate 285.

It belongs to the NAD-dependent glycerol-3-phosphate dehydrogenase family.

The protein localises to the cytoplasm. The catalysed reaction is sn-glycerol 3-phosphate + NAD(+) = dihydroxyacetone phosphate + NADH + H(+). The enzyme catalyses sn-glycerol 3-phosphate + NADP(+) = dihydroxyacetone phosphate + NADPH + H(+). It participates in membrane lipid metabolism; glycerophospholipid metabolism. Catalyzes the reduction of the glycolytic intermediate dihydroxyacetone phosphate (DHAP) to sn-glycerol 3-phosphate (G3P), the key precursor for phospholipid synthesis. The polypeptide is Glycerol-3-phosphate dehydrogenase [NAD(P)+] (Klebsiella pneumoniae subsp. pneumoniae (strain ATCC 700721 / MGH 78578)).